The primary structure comprises 229 residues: Putative N-acetylmannosamine-6-phosphate 2-epimerase (229 aa).

Belongs to the NanE family.

It catalyses the reaction an N-acyl-D-glucosamine 6-phosphate = an N-acyl-D-mannosamine 6-phosphate. It participates in amino-sugar metabolism; N-acetylneuraminate degradation; D-fructose 6-phosphate from N-acetylneuraminate: step 3/5. Its function is as follows. Converts N-acetylmannosamine-6-phosphate (ManNAc-6-P) to N-acetylglucosamine-6-phosphate (GlcNAc-6-P). The protein is Putative N-acetylmannosamine-6-phosphate 2-epimerase of Cutibacterium acnes (strain DSM 16379 / KPA171202) (Propionibacterium acnes).